The chain runs to 1050 residues: RecBCD enzyme subunit RecB (1050 aa).

The 443-residue stretch at 1 to 443 folds into the UvrD-like helicase ATP-binding domain; the sequence is MKPFNIFDSN…LQLVNNYRST (443 aa). The segment at 1-766 is DNA-binding and helicase activity, interacts with RecC; sequence MKPFNIFDSN…TNYVKLEGTQ (766 aa). Residue 21–28 coordinates ATP; the sequence is ASAGTGKT. Positions 458–701 constitute a UvrD-like helicase C-terminal domain; sequence SPFLEIPGYL…KITTIHSSKG (244 aa). A nuclease activity, interacts with RecD and RecA region spans residues 814-1050; it reads PKTIFSFSST…KAIQKCQAYH (237 aa). His-859, Asp-945, and Asp-958 together coordinate Mg(2+). Residue Asp-958 is the For nuclease activity of the active site.

The protein belongs to the helicase family. UvrD subfamily. Heterotrimer of RecB, RecC and RecD. All subunits contribute to DNA-binding. Interacts with RecA. Requires Mg(2+) as cofactor.

It catalyses the reaction Exonucleolytic cleavage (in the presence of ATP) in either 5'- to 3'- or 3'- to 5'-direction to yield 5'-phosphooligonucleotides.. The enzyme catalyses Couples ATP hydrolysis with the unwinding of duplex DNA by translocating in the 3'-5' direction.. It carries out the reaction ATP + H2O = ADP + phosphate + H(+). Functionally, a helicase/nuclease that prepares dsDNA breaks (DSB) for recombinational DNA repair. Binds to DSBs and unwinds DNA via a highly rapid and processive ATP-dependent bidirectional helicase activity. Unwinds dsDNA until it encounters a Chi (crossover hotspot instigator) sequence from the 3' direction. Cuts ssDNA a few nucleotides 3' to the Chi site. The properties and activities of the enzyme are changed at Chi. The Chi-altered holoenzyme produces a long 3'-ssDNA overhang and facilitates RecA-binding to the ssDNA for homologous DNA recombination and repair. Holoenzyme degrades any linearized DNA that is unable to undergo homologous recombination. In the holoenzyme this subunit contributes ATPase, 3'-5' helicase, exonuclease activity and loads RecA onto ssDNA. This Chlamydia pneumoniae (Chlamydophila pneumoniae) protein is RecBCD enzyme subunit RecB.